We begin with the raw amino-acid sequence, 764 residues long: PFL-like enzyme TdcE (764 aa).

Residues 7–629 (TSDKLYADAW…KTGNTPDGRR (623 aa)) form the PFL domain. C423 functions as the S-acetylcysteine intermediate in the catalytic mechanism. The active-site Cysteine radical intermediate is C424. Residues 622-645 (GNTPDGRRAGTPFAPGANPMHGRD) are disordered. Positions 636–764 (PGANPMHGRD…VISRTFTQAL (129 aa)) constitute a Glycine radical domain. G739 carries the glycine radical modification.

It belongs to the glycyl radical enzyme (GRE) family. PFL subfamily.

The protein localises to the cytoplasm. The catalysed reaction is 2-oxobutanoate + CoA = propanoyl-CoA + formate. The enzyme catalyses formate + acetyl-CoA = pyruvate + CoA. Its pathway is amino-acid degradation; L-threonine degradation via propanoate pathway; propanoate from L-threonine: step 2/4. With respect to regulation, dependent on PFL-activase. Functionally, catalyzes the cleavage of 2-ketobutyrate to propionyl-CoA and formate. It can also use pyruvate as substrate. In Escherichia coli (strain K12), this protein is PFL-like enzyme TdcE (tdcE).